The primary structure comprises 552 residues: Probable protein kinase UbiB (552 aa).

A Protein kinase domain is found at 121-504 (HFDTVPLASA…QGLQRRVVNA (384 aa)). ATP-binding positions include 127 to 135 (LASASISQV) and lysine 149. Residue aspartate 284 is the Proton acceptor of the active site. 2 helical membrane passes run 501-521 (VVNA…YGLH) and 530-550 (IPVW…SAWW).

It belongs to the ABC1 family. UbiB subfamily.

The protein localises to the cell inner membrane. It participates in cofactor biosynthesis; ubiquinone biosynthesis [regulation]. Functionally, is probably a protein kinase regulator of UbiI activity which is involved in aerobic coenzyme Q (ubiquinone) biosynthesis. The protein is Probable protein kinase UbiB of Xylella fastidiosa (strain M23).